The sequence spans 365 residues: ATP-dependent (S)-NAD(P)H-hydrate dehydratase (365 aa).

The N-terminal 43 residues, methionine 1–arginine 43, are a transit peptide targeting the chloroplast. Leucine 2 carries the post-translational modification N-acetylserine. Residues alanine 53–isoleucine 361 enclose the YjeF C-terminal domain. (6S)-NADPHX contacts are provided by residues glycine 169 and asparagine 222 to arginine 228. Residues lysine 262–aspartate 266 and glycine 281–glycine 290 each bind ATP. Aspartate 291 contacts (6S)-NADPHX.

This sequence belongs to the NnrD/CARKD family. Mg(2+) is required as a cofactor.

The protein localises to the plastid. The protein resides in the chloroplast. It is found in the cytoplasm. It carries out the reaction (6S)-NADHX + ATP = ADP + phosphate + NADH + H(+). The catalysed reaction is (6S)-NADPHX + ATP = ADP + phosphate + NADPH + H(+). In terms of biological role, catalyzes the dehydration of the S-form of NAD(P)HX at the expense of ATP, which is converted to ADP. Together with NAD(P)HX epimerase, which catalyzes the epimerization of the S- and R-forms, the enzyme allows the repair of both epimers of NAD(P)HX, a damaged form of NAD(P)H that is a result of enzymatic or heat-dependent hydration. The sequence is that of ATP-dependent (S)-NAD(P)H-hydrate dehydratase from Arabidopsis thaliana (Mouse-ear cress).